A 68-amino-acid chain; its full sequence is DNA-directed RNA polymerase subunit omega (68 aa).

The protein belongs to the RNA polymerase subunit omega family. The RNAP catalytic core consists of 2 alpha, 1 beta, 1 beta' and 1 omega subunit. When a sigma factor is associated with the core the holoenzyme is formed, which can initiate transcription.

It catalyses the reaction RNA(n) + a ribonucleoside 5'-triphosphate = RNA(n+1) + diphosphate. Its function is as follows. Promotes RNA polymerase assembly. Latches the N- and C-terminal regions of the beta' subunit thereby facilitating its interaction with the beta and alpha subunits. In Desulfatibacillum aliphaticivorans, this protein is DNA-directed RNA polymerase subunit omega.